The sequence spans 681 residues: Probable L-type lectin-domain containing receptor kinase S.7 (681 aa).

The N-terminal stretch at 1-21 (MSLSRKLLVIFFTWITALSMS) is a signal peptide. At 22 to 305 (KPIFVSSDNM…PSKKRRHRHN (284 aa)) the chain is on the extracellular side. The legume-lectin like stretch occupies residues 30–265 (NMNFTFKSFT…IHLIENWSFK (236 aa)). N-linked (GlcNAc...) asparagine glycans are attached at residues N32, N42, N86, N121, N135, N261, and N281. Residues 306–326 (LAIGLGISCPVLICLALFVFG) traverse the membrane as a helical segment. At 327-681 (YFTLKKWKSV…EGDSIVYVVS (355 aa)) the chain is on the cytoplasmic side. In terms of domain architecture, Protein kinase spans 365–643 (FHSSRVIGRG…RVLQILNNEI (279 aa)). Residues 371–379 (IGRGAFGNV) and K394 each bind ATP. Residue D493 is the Proton acceptor of the active site.

This sequence in the C-terminal section; belongs to the protein kinase superfamily. Ser/Thr protein kinase family. It in the N-terminal section; belongs to the leguminous lectin family.

The protein localises to the cell membrane. It carries out the reaction L-seryl-[protein] + ATP = O-phospho-L-seryl-[protein] + ADP + H(+). It catalyses the reaction L-threonyl-[protein] + ATP = O-phospho-L-threonyl-[protein] + ADP + H(+). Involved in resistance response to the pathogenic oomycetes Phytophthora infestans and Phytophthora capsici. The chain is Probable L-type lectin-domain containing receptor kinase S.7 from Arabidopsis thaliana (Mouse-ear cress).